We begin with the raw amino-acid sequence, 728 residues long: 1,4-alpha-glucan branching enzyme GlgB (728 aa).

Aspartate 405 serves as the catalytic Nucleophile. Catalysis depends on glutamate 458, which acts as the Proton donor. The interval 686 to 712 (YHGSNAGNAGAVQSDEHESHGRPHSLS) is disordered.

The protein belongs to the glycosyl hydrolase 13 family. GlgB subfamily. As to quaternary structure, monomer.

The enzyme catalyses Transfers a segment of a (1-&gt;4)-alpha-D-glucan chain to a primary hydroxy group in a similar glucan chain.. The protein operates within glycan biosynthesis; glycogen biosynthesis. Its function is as follows. Catalyzes the formation of the alpha-1,6-glucosidic linkages in glycogen by scission of a 1,4-alpha-linked oligosaccharide from growing alpha-1,4-glucan chains and the subsequent attachment of the oligosaccharide to the alpha-1,6 position. This Enterobacter sp. (strain 638) protein is 1,4-alpha-glucan branching enzyme GlgB.